The following is a 562-amino-acid chain: Exonuclease subunit 2 (562 aa).

36–43 contributes to the ATP binding site; that stretch reads GKNGGGKS.

To phage T5 protein D13 and to yeast RAD52. Consists of two subunits: Gp47 and Gp46.

Exonuclease involved in phage DNA recombination, replication, and repair. The polypeptide is Exonuclease subunit 2 (46) (Escherichia phage RB69 (Bacteriophage RB69)).